Consider the following 951-residue polypeptide: Serine/threonine-protein phosphatase 4 regulatory subunit 1 (951 aa).

HEAT repeat units lie at residues 26 to 63 (ESDVIIIPSALDFVSQDEMLTPLGRLDKYAASENVFNR), 82 to 119 (RDCIAVLERISRLADDSEPTVRAELMEQVPHIALFCQE), 127 to 164 (AFSKYLLPIVVRYLADQNNQVRKTSQAALLALLEQELI), 168 to 206 (DVETKVCPVLIDLTAPDSNDDVKTEAVAIMCKMAPMVGK), 208 to 246 (ITERLILPRFCEMCCDCRMFHVRKVCAANFGDICSVVGQ), 248 to 285 (ATEEMLLPRFFQLCSDNVWGVRKACAECFMAVSCATCQ), and 287 to 324 (IRRTKLSALFINLISDPSRWVRQAAFQSLGPFISTFAN). Disordered regions lie at residues 326 to 395 (SSSG…DMRV), 407 to 501 (SESP…MATR), 539 to 569 (HDEAGGAEQRSELQDDAVGAGGELPNCSISE), and 592 to 612 (GGADVGPGGGGGFSPDEERRP). Basic and acidic residues-rich tracts occupy residues 332-360 (FKDESKSSEDKDRIRDDGVVQEEQSRPED), 464-483 (DLDKELQQDPGERPSPERTG), and 539-551 (HDEAGGAEQRSEL). The HEAT 8 repeat unit spans residues 502–539 (KELEEMIENLEPHMDDPDVKAQVEVLSAALRASTLDAH). The span at 594–604 (ADVGPGGGGGF) shows a compositional bias: gly residues. 4 HEAT repeats span residues 699–735 (LTAADLVPIFNGFLKDLDEVRIGVLKHLHDFLKLLHI), 777–815 (RDVYDYLRPIALNLCADKVSSVRWISYKLVSEMVKKLHM), 820–858 (TFGVELINELVENFGRCPKWSGRQAFVFVCQTVIEDDCL), and 862–899 (QFAVHLMPHLLTLANDRVPNVRVLLAKTLRQTLLEKEY). A Phosphoserine modification is found at Ser936.

As to quaternary structure, serine/threonine-protein phosphatase 4 (PP4) occurs in different assemblies of the catalytic and one or more regulatory subunits. Component of the PP4 complex PPP4C-PPP4R1. Interacts with HDAC3.

Functionally, regulatory subunit of serine/threonine-protein phosphatase 4. May play a role in regulation of cell division in renal glomeruli. The PPP4C-PPP4R1 PP4 complex may play a role in dephosphorylation and regulation of HDAC3. Plays a role in the inhibition of TNF-induced NF-kappa-B activation by regulating the dephosphorylation of TRAF2. This is Serine/threonine-protein phosphatase 4 regulatory subunit 1 (Ppp4r1) from Rattus norvegicus (Rat).